A 334-amino-acid polypeptide reads, in one-letter code: WD repeat domain 54 (334 aa).

WD repeat units follow at residues 162 to 206 (GHQT…TLLT), 208 to 247 (IAGF…LHIQ), and 250 to 289 (AHAR…ESGS).

Homodimer and homotrimer; forms tight forms of dimers and trimers. Interacts with IZUMO1 and IZUMO1R/JUNO. In terms of processing, cross-linked to tightly form both dimers and trimers by TGM2. Cross-linking enhances the activation of EGF receptor-mediated signaling pathway. Cross-linking is inhibited by EGF. Ubiquitinated. EGF increases ubiquitination. In terms of tissue distribution, widely expressed in the ovary and testis (at protein level).

Its subcellular location is the vesicle. The protein resides in the cytoplasm. It is found in the cell membrane. In terms of biological role, plays a role in the adhesion and fusion of the sperm-oocyte membrane through its interactions with IZUMO1 and IZUMO1R/JUNO. When cross-linked to form dimers and trimers, it has a regulatory effect on ERK signaling pathway activity in response to EGF stimulation. Colocalizes with the EGF receptor in WDR54-specific vesicle where it sustains the internalization and controls the degradation of the EGF receptor after EGF stimulation. The polypeptide is WD repeat domain 54 (Wdr54) (Rattus norvegicus (Rat)).